The chain runs to 210 residues: Probable nicotinate-nucleotide adenylyltransferase (210 aa).

Belongs to the NadD family.

The catalysed reaction is nicotinate beta-D-ribonucleotide + ATP + H(+) = deamido-NAD(+) + diphosphate. The protein operates within cofactor biosynthesis; NAD(+) biosynthesis; deamido-NAD(+) from nicotinate D-ribonucleotide: step 1/1. Functionally, catalyzes the reversible adenylation of nicotinate mononucleotide (NaMN) to nicotinic acid adenine dinucleotide (NaAD). This is Probable nicotinate-nucleotide adenylyltransferase from Streptococcus pyogenes serotype M18 (strain MGAS8232).